The primary structure comprises 474 residues: ATP synthase subunit beta (474 aa).

153-160 serves as a coordination point for ATP; sequence GGAGVGKT.

It belongs to the ATPase alpha/beta chains family. As to quaternary structure, F-type ATPases have 2 components, CF(1) - the catalytic core - and CF(0) - the membrane proton channel. CF(1) has five subunits: alpha(3), beta(3), gamma(1), delta(1), epsilon(1). CF(0) has three main subunits: a(1), b(2) and c(9-12). The alpha and beta chains form an alternating ring which encloses part of the gamma chain. CF(1) is attached to CF(0) by a central stalk formed by the gamma and epsilon chains, while a peripheral stalk is formed by the delta and b chains.

It localises to the cell inner membrane. It catalyses the reaction ATP + H2O + 4 H(+)(in) = ADP + phosphate + 5 H(+)(out). Its function is as follows. Produces ATP from ADP in the presence of a proton gradient across the membrane. The catalytic sites are hosted primarily by the beta subunits. The sequence is that of ATP synthase subunit beta from Neorickettsia sennetsu (strain ATCC VR-367 / Miyayama) (Ehrlichia sennetsu).